Consider the following 203-residue polypeptide: Nudix hydrolase 12, mitochondrial (203 aa).

Residues 18-166 form the Nudix hydrolase domain; it reads NFRLVSGCIP…WMQRALEEFL (149 aa). The Nudix box motif lies at 66 to 87; it reads GGWEDDETVLEAASREAIEEAG. 2 residues coordinate Mg(2+): Glu81 and Glu85.

This sequence belongs to the Nudix hydrolase family. Requires Mg(2+) as cofactor. Mn(2+) serves as cofactor. As to expression, expressed in roots, leaves, stems and inflorescences.

The protein localises to the mitochondrion. Probably mediates the hydrolysis of some nucleoside diphosphate derivatives. The chain is Nudix hydrolase 12, mitochondrial (NUDT12) from Arabidopsis thaliana (Mouse-ear cress).